The following is a 473-amino-acid chain: MEMQMSNSDRYRIEHDSMGDLRVPIDALWGAQTQRAIENFPISGRSMPQGFIHALGFIKAAAAKVNAELGLLPKSMAKEIEAAALDVAAGRYDAEFPVDIYQTGSGTSSNMNANEVIATLAMRATKGPIHPNDHVNLGQSSNDVVPTAIRISATLAVQGRLLPALKHLRKMINKRARGLGSVVKTGRTHLMDAMPLTFAQEFGAWSAQIVSAEARLNDTLKRLHRLPLGGTAIGTGINTDPHFGRNAVKVLSALTGIHFESANNKFEGLAAQDDLVELSGQFNTLAVALMKIANDLRWMNAGPLAGLGEIELPALQPGSSIMPGKVNPVIPEAVVMVASQVIGHHTAVTVAGQSGNFQLNVTLPLIAYNLLESATLLGNVVMLLADKVIVGLKVRQDRVQEVLERNPILVTALNPIIGYEKAAVIAKRAYKEHRPVLEVACEESNLNPVELARLLDPAALTEGGIHVVGGGGG.

Substrate-binding positions include 105-107, 130-133, 140-142, and T188; these read SGT, HPND, and SSN. The active-site Proton donor/acceptor is H189. Residue S319 is part of the active site. Residues S320 and 325–327 contribute to the substrate site; that span reads KVN.

The protein belongs to the class-II fumarase/aspartase family. Fumarase subfamily. In terms of assembly, homotetramer.

It localises to the cytoplasm. It catalyses the reaction (S)-malate = fumarate + H2O. It participates in carbohydrate metabolism; tricarboxylic acid cycle; (S)-malate from fumarate: step 1/1. In terms of biological role, involved in the TCA cycle. Catalyzes the stereospecific interconversion of fumarate to L-malate. This Xylella fastidiosa (strain Temecula1 / ATCC 700964) protein is Fumarate hydratase class II.